The sequence spans 140 residues: Transcription antitermination protein NusB (140 aa).

It belongs to the NusB family.

Involved in transcription antitermination. Required for transcription of ribosomal RNA (rRNA) genes. Binds specifically to the boxA antiterminator sequence of the ribosomal RNA (rrn) operons. The polypeptide is Transcription antitermination protein NusB (Elusimicrobium minutum (strain Pei191)).